The sequence spans 224 residues: 7-cyano-7-deazaguanine synthase (224 aa).

10-20 (LSGGLDSATVV) contacts ATP. Zn(2+) contacts are provided by C189, C199, C202, and C205.

It belongs to the QueC family. Zn(2+) is required as a cofactor.

The enzyme catalyses 7-carboxy-7-deazaguanine + NH4(+) + ATP = 7-cyano-7-deazaguanine + ADP + phosphate + H2O + H(+). It participates in purine metabolism; 7-cyano-7-deazaguanine biosynthesis. Functionally, catalyzes the ATP-dependent conversion of 7-carboxy-7-deazaguanine (CDG) to 7-cyano-7-deazaguanine (preQ(0)). The protein is 7-cyano-7-deazaguanine synthase of Stutzerimonas stutzeri (strain A1501) (Pseudomonas stutzeri).